A 232-amino-acid chain; its full sequence is UPF0758 protein EF_2926 (232 aa).

Positions 107-229 constitute an MPN domain; it reads KVTSSQQVAQ…YISLREENFF (123 aa). Zn(2+)-binding residues include His-178, His-180, and Asp-191. The short motif at 178–191 is the JAMM motif element; the sequence is HNHPSGNPTPSPQD.

This sequence belongs to the UPF0758 family.

In Enterococcus faecalis (strain ATCC 700802 / V583), this protein is UPF0758 protein EF_2926.